Here is a 216-residue protein sequence, read N- to C-terminus: Small ribosomal subunit protein uS3c (216 aa).

The 71-residue stretch at 39 to 109 folds into the KH type-2 domain; sequence IRSYINRELE…SIRINVIELT (71 aa).

The protein belongs to the universal ribosomal protein uS3 family. In terms of assembly, part of the 30S ribosomal subunit.

The protein resides in the plastid. It localises to the chloroplast. The chain is Small ribosomal subunit protein uS3c (rps3) from Guillardia theta (Cryptophyte).